A 168-amino-acid polypeptide reads, in one-letter code: uncharacterized protein (168 aa).

Low complexity predominate over residues 1–15 (MKRIISSSKSLKQLS). Residues 1 to 107 (MKRIISSSKS…NNNNNNNNNN (107 aa)) form a disordered region. Over residues 33–47 (SDSDSDSDSDSDSDS) the composition is skewed to acidic residues. A compositionally biased stretch (low complexity) spans 48–107 (DSNSNSNSNSNSNSNSNSNSNSNSNSNNNNNNTNNNNNNNNNNNNNNNNNNNNNNNNNNN).

This is an uncharacterized protein from Dictyostelium discoideum (Social amoeba).